Reading from the N-terminus, the 113-residue chain is ATP-dependent Clp protease adapter protein ClpS (113 aa).

The tract at residues 1 to 24 (MTAQLHMMSDKHDQDNDASVLLQT) is disordered.

Belongs to the ClpS family. Binds to the N-terminal domain of the chaperone ClpA.

In terms of biological role, involved in the modulation of the specificity of the ClpAP-mediated ATP-dependent protein degradation. This chain is ATP-dependent Clp protease adapter protein ClpS, found in Ruegeria pomeroyi (strain ATCC 700808 / DSM 15171 / DSS-3) (Silicibacter pomeroyi).